The primary structure comprises 278 residues: HTH-type transcriptional regulator HdfR (278 aa).

The 58-residue stretch at Met1 to Thr58 folds into the HTH lysR-type domain. Positions Phe18–Arg37 form a DNA-binding region, H-T-H motif.

Belongs to the LysR transcriptional regulatory family.

Functionally, negatively regulates the transcription of the flagellar master operon flhDC by binding to the upstream region of the operon. In Salmonella newport (strain SL254), this protein is HTH-type transcriptional regulator HdfR.